Reading from the N-terminus, the 457-residue chain is Biphenyl dioxygenase subunit alpha (457 aa).

Residues 58-174 form the Rieske domain; the sequence is WLMLGHETHI…VETYKGLVFA (117 aa). Residues Cys-100, His-102, Cys-120, and His-123 each coordinate [2Fe-2S] cluster. Positions 233 and 239 each coordinate Fe cation.

The protein belongs to the bacterial ring-hydroxylating dioxygenase alpha subunit family. Heterohexamer consisting of three BphA subunits and three BphE subunits. A ferredoxin (BphF) and a ferredoxin reductase (BphG) must be present to obtain activity. Requires [2Fe-2S] cluster as cofactor. Fe cation is required as a cofactor.

The catalysed reaction is biphenyl + NADH + O2 + H(+) = (2R,3S)-3-phenylcyclohexa-3,5-diene-1,2-diol + NAD(+). Its pathway is xenobiotic degradation; biphenyl degradation; 2-hydroxy-2,4-pentadienoate and benzoate from biphenyl: step 1/4. The sequence is that of Biphenyl dioxygenase subunit alpha (bphA) from Comamonas testosteroni (Pseudomonas testosteroni).